The following is a 167-amino-acid chain: Large ribosomal subunit protein uL10 (167 aa).

Belongs to the universal ribosomal protein uL10 family. Part of the ribosomal stalk of the 50S ribosomal subunit. The N-terminus interacts with L11 and the large rRNA to form the base of the stalk. The C-terminus forms an elongated spine to which L12 dimers bind in a sequential fashion forming a multimeric L10(L12)X complex.

Forms part of the ribosomal stalk, playing a central role in the interaction of the ribosome with GTP-bound translation factors. The protein is Large ribosomal subunit protein uL10 of Cytophaga hutchinsonii (strain ATCC 33406 / DSM 1761 / CIP 103989 / NBRC 15051 / NCIMB 9469 / D465).